The primary structure comprises 146 residues: Acidic phospholipase A2 C (146 aa).

Positions 1 to 21 are cleaved as a signal peptide; the sequence is MNPAHLLILAAVCVSPLGASS. The propeptide occupies 22 to 27; sequence NRPMPL. Cystine bridges form between Cys-38-Cys-98, Cys-53-Cys-145, Cys-55-Cys-71, Cys-70-Cys-126, Cys-77-Cys-119, Cys-87-Cys-112, and Cys-105-Cys-117. Residues Tyr-54, Gly-56, and Gly-58 each coordinate Ca(2+). The active site involves His-74. Asp-75 provides a ligand contact to Ca(2+). The active site involves Asp-120.

It belongs to the phospholipase A2 family. Group I subfamily. D49 sub-subfamily. The cofactor is Ca(2+). Expressed by the venom gland.

It is found in the secreted. It carries out the reaction a 1,2-diacyl-sn-glycero-3-phosphocholine + H2O = a 1-acyl-sn-glycero-3-phosphocholine + a fatty acid + H(+). PLA2 catalyzes the calcium-dependent hydrolysis of the 2-acyl groups in 3-sn-phosphoglycerides. In Naja sputatrix (Malayan spitting cobra), this protein is Acidic phospholipase A2 C.